A 91-amino-acid chain; its full sequence is Probable Fe(2+)-trafficking protein (91 aa).

Belongs to the Fe(2+)-trafficking protein family.

Functionally, could be a mediator in iron transactions between iron acquisition and iron-requiring processes, such as synthesis and/or repair of Fe-S clusters in biosynthetic enzymes. This chain is Probable Fe(2+)-trafficking protein, found in Cupriavidus metallidurans (strain ATCC 43123 / DSM 2839 / NBRC 102507 / CH34) (Ralstonia metallidurans).